The sequence spans 438 residues: MERWQNIQNVVVVGLGITGLSVVKHLVKYQPQTHVRVIDTRELPPGKESLPESVELHSGSWNSQWLAEADLVVANPGIALATSEIQDVIQAGTPVVGDIELFGWAVNKPAVAITGSNGKSTVTDLTGVLAKAAGLNVGVGGNIGIPALDLLELDADLYVLELSSFQLETTSSLNLAAAAFLNLSEDHMDRYQGMADYRDAKLRIFNNAQYAIVNREDKETYPDHSMPLVTFGLDDQEFGVATIDGTEWLTDNGKPVLPSQDLTLVGRHNVANALVSLALLKQVGIDYNKSLEALKAYNGLTHRCQVVANKREIKWVNDSKATNVASTLAALSGLEYQGTLYLLVGGVGKGADFSELKPVLAQLDRVQLCCFGEDAAQFMPLHPSAKTFDTMRDIIESISAQLVSGDMVMLSPACASFDQFNNFMARGDAFTELAHEYA.

Residue 115–121 coordinates ATP; it reads GSNGKST.

This sequence belongs to the MurCDEF family.

Its subcellular location is the cytoplasm. It catalyses the reaction UDP-N-acetyl-alpha-D-muramoyl-L-alanine + D-glutamate + ATP = UDP-N-acetyl-alpha-D-muramoyl-L-alanyl-D-glutamate + ADP + phosphate + H(+). The protein operates within cell wall biogenesis; peptidoglycan biosynthesis. Cell wall formation. Catalyzes the addition of glutamate to the nucleotide precursor UDP-N-acetylmuramoyl-L-alanine (UMA). This chain is UDP-N-acetylmuramoylalanine--D-glutamate ligase, found in Vibrio atlanticus (strain LGP32) (Vibrio splendidus (strain Mel32)).